A 260-amino-acid polypeptide reads, in one-letter code: ATP synthase subunit a (260 aa).

Positions 1-11 are cleaved as a propeptide — removed in mature form; it reads MQNTLLRTYIN. 6 helical membrane passes run 37–57, 96–116, 126–146, 152–172, 192–212, and 217–237; these read ITTFTLYTIIVLLVVSSLYVL, YFPFIYTLFMFILISNLISMI, FVFIISLSMIIWLGITILSLF, FFSLFVPSGTALPLVPLLVVI, IFSGHLLMAILAGLTMTFVQI, and LILGFIPLAIILIIMCLEFGI.

It belongs to the ATPase A chain family. F-type ATPases have 2 components, CF(1) - the catalytic core - and CF(0) - the membrane proton channel. CF(1) has five subunits: alpha(3), beta(3), gamma(1), delta(1), epsilon(1). CF(0) has three main subunits: a, b and c.

The protein resides in the mitochondrion inner membrane. In terms of biological role, mitochondrial membrane ATP synthase (F(1)F(0) ATP synthase or Complex V) produces ATP from ADP in the presence of a proton gradient across the membrane which is generated by electron transport complexes of the respiratory chain. F-type ATPases consist of two structural domains, F(1) - containing the extramembraneous catalytic core and F(0) - containing the membrane proton channel, linked together by a central stalk and a peripheral stalk. During catalysis, ATP synthesis in the catalytic domain of F(1) is coupled via a rotary mechanism of the central stalk subunits to proton translocation. Key component of the proton channel; it may play a direct role in the translocation of protons across the membrane. The chain is ATP synthase subunit a (ATP6) from Candida glabrata (strain ATCC 2001 / BCRC 20586 / JCM 3761 / NBRC 0622 / NRRL Y-65 / CBS 138) (Yeast).